The primary structure comprises 145 residues: Immunoglobulin iota chain (145 aa).

The N-terminal stretch at Met-1–Pro-19 is a signal peptide. The interval Gln-20–Cys-41 is framework-1. The region spanning Gln-20–Glu-132 is the Ig-like V-type domain. Cysteines 41 and 115 form a disulfide. The tract at residues Thr-42–Trp-56 is complementarity-determining-1. Residues Tyr-57–Arg-70 are framework-2. The segment at Tyr-71–Pro-81 is complementarity-determining-2. Residues Gln-82–Cys-115 are framework-3. A compositionally biased stretch (basic and acidic residues) spans Ser-121–Glu-130. Residues Ser-121–Pro-145 form a disordered region.

Belongs to the immunoglobulin superfamily. Interacts with IGLL1. Interacts with SYNV1/HRD1 (via N-terminus); this interaction leads to increased VPREB1 ubiquitination and degradation in pre-B cells, possibly through a lysosomal, not proteasomal, pathway. Only expressed by pre-B-cells.

The protein resides in the endoplasmic reticulum. Associates with the Ig-mu chain to form a molecular complex that is expressed on the surface of pre-B-cells. This complex presumably regulates Ig gene rearrangements in the early steps of B-cell differentiation. This chain is Immunoglobulin iota chain (VPREB1), found in Homo sapiens (Human).